The primary structure comprises 409 residues: Z-DNA-binding protein 1 (409 aa).

Z-binding domains follow at residues L8 to G70 and S85 to R147. Residues K17 and K43 each participate in a glycyl lysine isopeptide (Lys-Gly) (interchain with G-Cter in ubiquitin) cross-link. Positions S59–A87 are disordered. 2 consecutive short sequence motifs (RIP homotypic interaction motif (RHIM)) follow at residues N183 to I207 and L241 to D265. Disordered regions lie at residues H269–T307 and G323–D369. Residues P270–A290 show a composition bias toward low complexity. Over residues G337–T351 the composition is skewed to basic and acidic residues.

In terms of assembly, homodimer. Interacts (via RIP homotypic interaction motif) with RIPK3; leading to RIPK3 activation and necroptosis; interaction is enhanced by CASP6. Interacts (via RIP homotypic interaction motif) with RIPK1. Component of the AIM2 PANoptosome complex, a multiprotein complex that drives inflammatory cell death (PANoptosis). Post-translationally, ubiquitinated; polyubiquitinated following influenza A virus (IAV) infection. In terms of processing, phosphorylated.

Its subcellular location is the cytoplasm. The protein localises to the nucleus. With respect to regulation, ZBP1-dependent necroptosis is normally inhibited by RIPK1: RIPK1 inhibits the ZBP1-induced activation of RIPK3 via FADD-mediated recruitment of CASP8, which cleaves RIPK1 and limits TNF-induced necroptosis. Its function is as follows. Key innate sensor that recognizes and binds Z-RNA structures, which are produced by a number of viruses, such as herpesvirus, orthomyxovirus or flavivirus, and triggers different forms of cell death. ZBP1 acts as an essential mediator of pyroptosis, necroptosis and apoptosis (PANoptosis), an integral part of host defense against pathogens, by activating RIPK3, caspase-8 (CASP8), and the NLRP3 inflammasome. Key activator of necroptosis, a programmed cell death process in response to death-inducing TNF-alpha family members, via its ability to bind Z-RNA: once activated upon Z-RNA-binding, ZBP1 interacts and stimulates RIPK3 kinase, which phosphorylates and activates MLKL, triggering execution of programmed necrosis. In addition to TNF-induced necroptosis, necroptosis can also take place in the nucleus in response to orthomyxoviruses infection: ZBP1 recognizes and binds Z-RNA structures that are produced in infected nuclei by orthomyxoviruses, such as the influenza A virus (IAV), leading to ZBP1 activation, RIPK3 stimulation and subsequent MLKL phosphorylation, triggering disruption of the nuclear envelope and leakage of cellular DNA into the cytosol. ZBP1-dependent cell death in response to IAV infection promotes interleukin-1 alpha (IL1A) induction in an NLRP3-inflammasome-independent manner: IL1A expression is required for the optimal interleukin-1 beta (IL1B) production, and together, these cytokines promote infiltration of inflammatory neutrophils to the lung, leading to the formation of neutrophil extracellular traps. In addition to its direct role in driving necroptosis via its ability to sense Z-RNAs, also involved in PANoptosis triggered in response to bacterial infection: component of the AIM2 PANoptosome complex, a multiprotein complex that triggers PANoptosis. Also acts as the apical sensor of fungal infection responsible for activating PANoptosis. Involved in CASP8-mediated cell death via its interaction with RIPK1 but independently of its ability to sense Z-RNAs. In some cell types, also able to restrict viral replication by promoting cell death-independent responses. In response to flavivirus infection in neurons, promotes a cell death-independent pathway that restricts viral replication: together with RIPK3, promotes a death-independent transcriptional program that modifies the cellular metabolism via up-regulation expression of the enzyme ACOD1/IRG1 and production of the metabolite itaconate. Itaconate inhibits the activity of succinate dehydrogenase, generating a metabolic state in neurons that suppresses replication of viral genomes. The protein is Z-DNA-binding protein 1 of Rattus norvegicus (Rat).